The sequence spans 139 residues: Immunogenic miracidial antigen 8I' (139 aa).

The disordered stretch occupies residues 61–139 (IDVGDEDYHD…PKKYGSGYKH (79 aa)). The segment covering 64 to 85 (GDEDYHDGDDDVDYTDDVDDVD) has biased composition (acidic residues). Residues 90–103 (SPSQLLQGGYQRNQ) show a composition bias toward polar residues.

It belongs to the immunogenic miracidial antigen family.

The sequence is that of Immunogenic miracidial antigen 8I' (8I') from Schistosoma japonicum (Blood fluke).